The chain runs to 172 residues: Melanocortin-2 receptor accessory protein (172 aa).

A helical transmembrane segment spans residues 38–58 (IVIAFWVSLAAFVVLLFLILL). 2 disordered regions span residues 105–130 (QAQASSVEPGSRTGPDQPLRQESSST) and 152–172 (PLVRSKPSEPPPGDRTSQLQS).

This sequence belongs to the MRAP family. In terms of assembly, homodimer and heterodimer. Forms antiparallel homodimers and heterodimers with MRAP2. Interacts with MC1R, MC2R, MC3R, MC4R and MC5R.

The protein localises to the cell membrane. It localises to the endoplasmic reticulum membrane. Its function is as follows. Modulator of melanocortin receptors (MC1R, MC2R, MC3R, MC4R and MC5R). Acts by increasing ligand-sensitivity of melanocortin receptors and enhancing generation of cAMP by the receptors. Required both for MC2R trafficking to the cell surface of adrenal cells and for signaling in response to corticotropin (ACTH). May be involved in the intracellular trafficking pathways in adipocyte cells. In Pan troglodytes (Chimpanzee), this protein is Melanocortin-2 receptor accessory protein (MRAP).